The sequence spans 507 residues: ATP synthase subunit alpha (507 aa).

168–175 (GDRQTGKT) contributes to the ATP binding site.

Belongs to the ATPase alpha/beta chains family. F-type ATPases have 2 components, CF(1) - the catalytic core - and CF(0) - the membrane proton channel. CF(1) has five subunits: alpha(3), beta(3), gamma(1), delta(1), epsilon(1). CF(0) has three main subunits: a(1), b(2) and c(9-12). The alpha and beta chains form an alternating ring which encloses part of the gamma chain. CF(1) is attached to CF(0) by a central stalk formed by the gamma and epsilon chains, while a peripheral stalk is formed by the delta and b chains.

The protein localises to the cell membrane. It carries out the reaction ATP + H2O + 4 H(+)(in) = ADP + phosphate + 5 H(+)(out). In terms of biological role, produces ATP from ADP in the presence of a proton gradient across the membrane. The alpha chain is a regulatory subunit. This is ATP synthase subunit alpha from Mesomycoplasma hyopneumoniae (strain J / ATCC 25934 / NCTC 10110) (Mycoplasma hyopneumoniae).